The chain runs to 448 residues: tRNA-2-methylthio-N(6)-dimethylallyladenosine synthase (448 aa).

Residues 7-123 form the MTTase N-terminal domain; sequence RSFYIHTFGC…LPALIGDAEE (117 aa). 6 residues coordinate [4Fe-4S] cluster: Cys16, Cys52, Cys86, Cys159, Cys163, and Cys166. Residues 145–375 form the Radical SAM core domain; the sequence is REVGVGAFVP…IDLQLSISAE (231 aa). Residues 378 to 441 form the TRAM domain; the sequence is QEAVGSVVDV…SATLTGVNQG (64 aa).

Belongs to the methylthiotransferase family. MiaB subfamily. Monomer. The cofactor is [4Fe-4S] cluster.

It localises to the cytoplasm. It catalyses the reaction N(6)-dimethylallyladenosine(37) in tRNA + (sulfur carrier)-SH + AH2 + 2 S-adenosyl-L-methionine = 2-methylsulfanyl-N(6)-dimethylallyladenosine(37) in tRNA + (sulfur carrier)-H + 5'-deoxyadenosine + L-methionine + A + S-adenosyl-L-homocysteine + 2 H(+). Functionally, catalyzes the methylthiolation of N6-(dimethylallyl)adenosine (i(6)A), leading to the formation of 2-methylthio-N6-(dimethylallyl)adenosine (ms(2)i(6)A) at position 37 in tRNAs that read codons beginning with uridine. The polypeptide is tRNA-2-methylthio-N(6)-dimethylallyladenosine synthase (Chlorobium phaeovibrioides (strain DSM 265 / 1930) (Prosthecochloris vibrioformis (strain DSM 265))).